Reading from the N-terminus, the 1458-residue chain is ABC multidrug transporter B (1458 aa).

5 helical membrane passes run 30 to 50 (FSLL…VLII), 70 to 90 (LLWA…VLAV), 102 to 122 (ASIA…LLSC), 128 to 148 (STTP…FDIA), and 165 to 185 (IAIL…LEAV). An N-linked (GlcNAc...) asparagine glycan is attached at Asn-208. Residues 273-295 (WPLLSAVPPRACLAALNFCQPLL) form a helical membrane-spanning segment. The ABC transmembrane type-1 1 domain occupies 283–561 (ACLAALNFCQ…LVMALMTFVG (279 aa)). A glycan (N-linked (GlcNAc...) asparagine) is linked at Asn-309. 5 helical membrane passes run 314 to 334 (IGYG…VTMG), 387 to 407 (WQTI…IYLL), 411 to 431 (LGVA…GCLI), 501 to 521 (LGWT…YGIM), and 541 to 561 (LFAL…TFVG). Residues 626–853 (LTVKNATFAW…AGGYVSSFGL (228 aa)) form the ABC transporter 1 domain. The N-linked (GlcNAc...) asparagine glycan is linked to Asn-630. 660–667 (GPSGCGKS) lines the ATP pocket. N-linked (GlcNAc...) asparagine glycosylation is found at Asn-702, Asn-804, and Asn-879. In terms of domain architecture, ABC transmembrane type-1 2 spans 933 to 1182 (PNGRTGYYLG…LVTFWTNLET (250 aa)). Helical transmembrane passes span 940 to 960 (YLGI…IGCW), 978 to 998 (LLAT…SGSI), 1016 to 1036 (AAIN…LMGI), 1040 to 1060 (YAAI…KVYL), 1125 to 1145 (LTLT…VLVV), and 1156 to 1176 (VGVA…LVTF). Positions 1219-1449 (IEFKSVSAEY…EGSYFSRLYA (231 aa)) constitute an ABC transporter 2 domain. Residue 1252–1259 (GRTGSGKT) coordinates ATP. The N-linked (GlcNAc...) asparagine glycan is linked to Asn-1316.

It belongs to the ABC transporter superfamily. ABCC family. Conjugate transporter (TC 3.A.1.208) subfamily.

It localises to the cell membrane. In terms of biological role, pleiotropic ABC efflux transporter that may be involved in A.fumigatus adaptation to azoles such as vorizonazole. The polypeptide is ABC multidrug transporter B (Aspergillus fumigatus (strain ATCC MYA-4609 / CBS 101355 / FGSC A1100 / Af293) (Neosartorya fumigata)).